Reading from the N-terminus, the 276-residue chain is Large ribosomal subunit protein uL2 (276 aa).

Residues 225–276 (MNPNDHPHGGGEGRNPIGRNPVTPWGKPALGAKTRKKKHPSNRFIVKRRGKK) are disordered. The span at 257–276 (KTRKKKHPSNRFIVKRRGKK) shows a compositional bias: basic residues.

Belongs to the universal ribosomal protein uL2 family. As to quaternary structure, part of the 50S ribosomal subunit. Forms a bridge to the 30S subunit in the 70S ribosome.

Its function is as follows. One of the primary rRNA binding proteins. Required for association of the 30S and 50S subunits to form the 70S ribosome, for tRNA binding and peptide bond formation. It has been suggested to have peptidyltransferase activity; this is somewhat controversial. Makes several contacts with the 16S rRNA in the 70S ribosome. This chain is Large ribosomal subunit protein uL2, found in Desulfitobacterium hafniense (strain Y51).